Here is a 616-residue protein sequence, read N- to C-terminus: Proline--tRNA ligase (616 aa).

It belongs to the class-II aminoacyl-tRNA synthetase family. ProS type 1 subfamily. In terms of assembly, homodimer.

Its subcellular location is the cytoplasm. It catalyses the reaction tRNA(Pro) + L-proline + ATP = L-prolyl-tRNA(Pro) + AMP + diphosphate. Its function is as follows. Catalyzes the attachment of proline to tRNA(Pro) in a two-step reaction: proline is first activated by ATP to form Pro-AMP and then transferred to the acceptor end of tRNA(Pro). As ProRS can inadvertently accommodate and process non-cognate amino acids such as alanine and cysteine, to avoid such errors it has two additional distinct editing activities against alanine. One activity is designated as 'pretransfer' editing and involves the tRNA(Pro)-independent hydrolysis of activated Ala-AMP. The other activity is designated 'posttransfer' editing and involves deacylation of mischarged Ala-tRNA(Pro). The misacylated Cys-tRNA(Pro) is not edited by ProRS. The chain is Proline--tRNA ligase from Lactococcus lactis subsp. lactis (strain IL1403) (Streptococcus lactis).